The primary structure comprises 105 residues: RxLR effector protein PITG_18670 (105 aa).

Residues 1 to 21 form the signal peptide; sequence MRSIFYFALAFAALTCSNASA. The RxLR-dEER signature appears at 39-57; the sequence is RSLRVAGQEVARGDRGEEI.

Belongs to the RxLR effector family.

Its subcellular location is the secreted. The protein resides in the host nucleus. It localises to the host nucleolus. It is found in the host cytoplasm. Effector that enhances P.infestans colonization of Nicotiana benthamiana leaves. The chain is RxLR effector protein PITG_18670 from Phytophthora infestans (strain T30-4) (Potato late blight agent).